Reading from the N-terminus, the 181-residue chain is Putative ankyrin repeat protein RF_0782 (181 aa).

2 ANK repeats span residues 24–53 (YHYS…DINF) and 54–83 (GSTP…NTQI).

The polypeptide is Putative ankyrin repeat protein RF_0782 (Rickettsia felis (strain ATCC VR-1525 / URRWXCal2) (Rickettsia azadi)).